Reading from the N-terminus, the 539-residue chain is 4-coumarate--CoA ligase 5 (539 aa).

The ATP site is built by Ser-185, Ser-186, Gly-187, Thr-188, Thr-189, and Lys-193. Residues Tyr-235 and Ser-239 each contribute to the (E)-4-coumaroyl-AMP site. Position 256 (Arg-256) interacts with CoA. The SBD1 stretch occupies residues 258-327; sequence DTVKMLQLVE…AKLPNAVLGQ (70 aa). Ala-305, Gln-327, Gly-328, Thr-332, and Met-340 together coordinate (E)-4-coumaroyl-AMP. ATP-binding residues include Gln-327, Gly-328, and Thr-332. The interval 328 to 395 is SBD2; it reads GYGMTEAGPV…IRGKQIMKGY (68 aa). Residues Asp-416 and Arg-431 each contribute to the ATP site. Residues Lys-433 and Lys-437 each contribute to the (E)-4-coumaroyl-AMP site. Residues Lys-439 and Gly-440 each coordinate CoA. Lys-522 contacts ATP.

This sequence belongs to the ATP-dependent AMP-binding enzyme family. Mg(2+) is required as a cofactor. In terms of tissue distribution, expressed in roots, stems, leaf blades, leaf sheaths and spikelets.

The catalysed reaction is (E)-ferulate + ATP + CoA = (E)-feruloyl-CoA + AMP + diphosphate. It catalyses the reaction (E)-4-coumarate + ATP + CoA = (E)-4-coumaroyl-CoA + AMP + diphosphate. It carries out the reaction (E)-sinapate + ATP + CoA = (E)-sinapoyl-CoA + AMP + diphosphate. The enzyme catalyses (E)-caffeate + ATP + CoA = (E)-caffeoyl-CoA + AMP + diphosphate. The catalysed reaction is (E)-cinnamate + ATP + CoA = (E)-cinnamoyl-CoA + AMP + diphosphate. It catalyses the reaction (E)-ferulate + ATP + H(+) = (E)-feruloyl-AMP + diphosphate. It carries out the reaction (E)-feruloyl-AMP + CoA = (E)-feruloyl-CoA + AMP + H(+). The enzyme catalyses (E)-4-coumarate + ATP + H(+) = (E)-4-coumaroyl-AMP + diphosphate. The catalysed reaction is (E)-4-coumaroyl-AMP + CoA = (E)-4-coumaroyl-CoA + AMP + H(+). It catalyses the reaction (E)-sinapate + ATP + H(+) = (E)-sinapoyl-AMP + diphosphate. It carries out the reaction (E)-sinapoyl-AMP + CoA = (E)-sinapoyl-CoA + AMP + H(+). The enzyme catalyses (E)-caffeate + ATP + H(+) = (E)-caffeoyl-AMP + diphosphate. The catalysed reaction is (E)-caffeoyl-AMP + CoA = (E)-caffeoyl-CoA + AMP + H(+). It participates in phytoalexin biosynthesis; 3,4',5-trihydroxystilbene biosynthesis; 3,4',5-trihydroxystilbene from trans-4-coumarate: step 1/2. Its function is as follows. Involved in the phenylpropanoid metabolism by mediating the activation of a number of hydroxycinnamates for the biosynthesis of monolignols and other phenolic secondary metabolites. Catalyzes the formation of CoA esters of cinnamate, 4-coumarate, caffeate and ferulate. Is also able to convert sinapate to its corresponding CoA ester, a reaction that is rarely observed in 4CL catalysis. Is more efficient with substrates in the following order: ferulate &gt; 4-coumarate &gt; sinapate &gt; caffeate &gt; cinnamate. Follows a two-step reaction mechanism, wherein the carboxylate substrate first undergoes adenylation by ATP, followed by a thioesterification in the presence of CoA to yield the final CoA thioesters. This is 4-coumarate--CoA ligase 5 from Oryza sativa subsp. japonica (Rice).